The following is a 453-amino-acid chain: Serine/threonine-protein phosphatase 2A regulatory subunit B'' subunit gamma (453 aa).

2 EF-hand domains span residues Pro273 to Asn308 and Lys341 to Leu376. The Ca(2+) site is built by Asp286, Asp288, Asn290, Met292, and Glu297.

In terms of assembly, interacts with MCM3AP/GANP. Interacts with PPP5C, and the phosphatase 2A core enzyme composed of the PPP2CA catalytic subunit and the constant regulatory subunit PPP2R1A. Finds in a complex with ABCB1, TFPI2 and PPP2R3C; leading to the dephosphorylation of ABCB1. In terms of tissue distribution, ubiquitously expressed in brain and other tissues.

Its subcellular location is the nucleus. It is found in the cytoplasm. In terms of biological role, may regulate MCM3AP phosphorylation through phosphatase recruitment. May act as a negative regulator of ABCB1 expression and function through the dephosphorylation of ABCB1 by TFPI2/PPP2R3C complex. May play a role in the activation-induced cell death of B-cells. The protein is Serine/threonine-protein phosphatase 2A regulatory subunit B'' subunit gamma (PPP2R3C) of Homo sapiens (Human).